The sequence spans 240 residues: Probable transcriptional regulatory protein BLi02909/BL01150 (240 aa).

Positions 1–14 are enriched in basic residues; sequence MAGHSKWKNIQRRK. The disordered stretch occupies residues 1–21; that stretch reads MAGHSKWKNIQRRKNAQDAKR.

The protein belongs to the TACO1 family.

It localises to the cytoplasm. The protein is Probable transcriptional regulatory protein BLi02909/BL01150 of Bacillus licheniformis (strain ATCC 14580 / DSM 13 / JCM 2505 / CCUG 7422 / NBRC 12200 / NCIMB 9375 / NCTC 10341 / NRRL NRS-1264 / Gibson 46).